We begin with the raw amino-acid sequence, 123 residues long: MPTVNQLIRKPRVAPVKRNKVPALQSNPQKRGVCTRVYTTTPKKPNSALRKVAKIRLTNGFEVIGYIPGEGHNLQEHSVVMIRGGRVKDLPGVRYHIIRGLLDTQGVKNRKQRRSKYGAKRPK.

Aspartate 89 bears the 3-methylthioaspartic acid mark.

This sequence belongs to the universal ribosomal protein uS12 family. In terms of assembly, part of the 30S ribosomal subunit. Contacts proteins S8 and S17. May interact with IF1 in the 30S initiation complex.

Its function is as follows. With S4 and S5 plays an important role in translational accuracy. Interacts with and stabilizes bases of the 16S rRNA that are involved in tRNA selection in the A site and with the mRNA backbone. Located at the interface of the 30S and 50S subunits, it traverses the body of the 30S subunit contacting proteins on the other side and probably holding the rRNA structure together. The combined cluster of proteins S8, S12 and S17 appears to hold together the shoulder and platform of the 30S subunit. In Bartonella tribocorum (strain CIP 105476 / IBS 506), this protein is Small ribosomal subunit protein uS12.